Consider the following 44-residue polypeptide: Large ribosomal subunit protein bL34 (44 aa).

The protein belongs to the bacterial ribosomal protein bL34 family.

The polypeptide is Large ribosomal subunit protein bL34 (Wolbachia sp. subsp. Brugia malayi (strain TRS)).